Here is a 97-residue protein sequence, read N- to C-terminus: YcgL domain-containing protein CPS_3517 (97 aa).

The YcgL domain occupies 1-85; sequence MLCAIYKSAR…PQEDLLKEHK (85 aa).

The sequence is that of YcgL domain-containing protein CPS_3517 from Colwellia psychrerythraea (strain 34H / ATCC BAA-681) (Vibrio psychroerythus).